The chain runs to 220 residues: Translin-1 (220 aa).

This sequence belongs to the translin family. As to quaternary structure, forms an octameric ring-shaped structure, which is capable of binding DNA or RNA.

It localises to the cytoplasm. It is found in the nucleus. Its function is as follows. DNA-binding protein that specifically recognizes consensus sequences at the breakpoint junctions in chromosomal translocations. Selectively binds single-stranded d(GT)n and d(GTT)n microsatellite repeats. Has much higher affinities for the homologous RNA sequences (GU)n and (GUU)n. Does not bind double-stranded DNA. Has a role in meiosis. This Schizosaccharomyces pombe (strain 972 / ATCC 24843) (Fission yeast) protein is Translin-1 (tsn1).